A 2774-amino-acid chain; its full sequence is Teneurin-2 (2774 aa).

One can recognise a Teneurin N-terminal domain in the interval 1 to 375 (MDVKDRRHRS…KPSKYCSWKC (375 aa)). Residues 1 to 379 (MDVKDRRHRS…YCSWKCAALS (379 aa)) are Cytoplasmic-facing. Residues Ser90 and Ser124 each carry the phosphoserine modification. Residues 111–271 (TGSDADSDTE…HHHSSANSLN (161 aa)) are disordered. The span at 141–155 (SSGLSSRENSALTLT) shows a compositional bias: polar residues. A Phosphothreonine modification is found at Thr155. Ser157 bears the Phosphoserine mark. Residues 159–168 (NENKSDDDNG) show a composition bias toward basic and acidic residues. A compositionally biased stretch (low complexity) spans 174–188 (TSSSSLLPSAQLPSS). Over residues 202–211 (DSNTSHQIMD) the composition is skewed to polar residues. Positions 229–240 (SGPQQASSSGPP) are enriched in low complexity. A helical membrane pass occupies residues 380-400 (AIAAALLLAILLAYFIAMHLL). The Extracellular segment spans residues 401 to 2774 (GLNWQLQPAD…FLRQNEMGKR (2374 aa)). 2 N-linked (GlcNAc...) asparagine glycosylation sites follow: Asn443 and Asn482. 8 EGF-like domains span residues 575-603 (DCPR…ADCA), 605-634 (AACP…AECD), 636-668 (PMNQ…EHCE), 669-701 (EVDC…NCEL), 702-735 (ARVQ…PDCS), 738-766 (VCSV…AACD), 769-797 (VCHP…EHCT), and 808-841 (DGCP…PGCN). 22 disulfides stabilise this stretch: Cys576-Cys586, Cys580-Cys591, Cys593-Cys602, Cys611-Cys622, Cys624-Cys633, Cys640-Cys651, Cys645-Cys656, Cys658-Cys667, Cys672-Cys683, Cys677-Cys688, Cys690-Cys699, Cys710-Cys723, Cys725-Cys734, Cys739-Cys749, Cys743-Cys754, Cys756-Cys765, Cys770-Cys780, Cys774-Cys785, Cys787-Cys796, Cys810-Cys820, Cys814-Cys829, and Cys831-Cys840. N-linked (GlcNAc...) asparagine glycans are attached at residues Asn925, Asn948, and Asn1267. NHL repeat units follow at residues 1272-1316 (LELR…VKSL), 1342-1386 (ARCG…NGII), 1401-1452 (LSCD…IAGR), 1474-1501 (LESA…INRL), and 1530-1573 (CYSG…VSKN). The stretch at 1583 to 1602 (YEAASPGEQELYVFNADGIH) is one YD 1 repeat. Asn1616 carries N-linked (GlcNAc...) asparagine glycosylation. YD repeat units follow at residues 1619 to 1639 (YSAD…LKIR), 1682 to 1701 (YDGN…WTTF), and 1702 to 1724 (YDYD…TSLH). Residues Asn1712, Asn1749, Asn1773, Asn1807, and Asn1892 are each glycosylated (N-linked (GlcNAc...) asparagine). YD repeat units lie at residues 1895 to 1914 (YFFN…ERTD), 1936 to 1954 (YLDK…YIFE), 1955 to 1975 (YDSS…HSMS), 1982 to 1999 (YIRN…VIFD), 2000 to 2021 (YSDD…VFYK), 2022 to 2039 (YGKL…TAVT), 2042 to 2062 (YDET…FSCT), 2065 to 2085 (YRKV…EGMI), 2093 to 2113 (YHDN…TPLP), 2119 to 2136 (YDEI…GVIY), 2137 to 2163 (YDIN…IKEV), 2165 to 2178 (YEMF…MTVQ), 2179 to 2202 (YDSM…TKYT), 2205 to 2225 (YDGD…WRYS), 2226 to 2246 (YDLN…LMPL), 2248 to 2268 (YDLR…DDDG), 2280 to 2300 (YNSK…SVQY), and 2302 to 2322 (YDGV…LQYF). Asn1993 carries N-linked (GlcNAc...) asparagine glycosylation. Residue Asn2197 is glycosylated (N-linked (GlcNAc...) asparagine). N-linked (GlcNAc...) asparagine glycosylation is present at Asn2337. Residues 2348 to 2389 (YDLQGHLFAMESSSGEEYYVASDNTGTPLAVFSINGLMIKQL) form a YD 23 repeat. Asn2648 is a glycosylation site (N-linked (GlcNAc...) asparagine).

The protein belongs to the tenascin family. Teneurin subfamily. As to quaternary structure, homodimer; disulfide-linked. Heterodimer with either TENM1 or TENM3. May also form heterodimer with TENM4. Interacts with ADGRL1 isoform 2. In terms of processing, derives from the membrane form by proteolytic processing. Post-translationally, derives from the plasma membrane form by proteolytic cleavage and translocates to the nucleus. Homophilic binding of the C-terminal extracellular domain stimulates its proteolytic cleavage and release in the cytoplasmic. Is subjected to rapid degradation by the proteasome pathway. In terms of tissue distribution, expressed in the brain (at protein level).

Its subcellular location is the cell membrane. The protein localises to the presynaptic cell membrane. It is found in the postsynaptic cell membrane. It localises to the endoplasmic reticulum. The protein resides in the golgi apparatus. Its subcellular location is the synapse. The protein localises to the cell projection. It is found in the dendritic spine. It localises to the filopodium. The protein resides in the growth cone. Its subcellular location is the nucleus. The protein localises to the PML body. In terms of biological role, involved in neural development, regulating the establishment of proper connectivity within the nervous system. Acts as a ligand of the ADGRL1 and ADGRL3 receptors that are expressed at the surface of adjacent cells. Promotes the formation of filopodia and enlarged growth cone in neuronal cells. Mediates axon guidance and homophilic and heterophilic cell-cell adhesion. May function as a cellular signal transducer. Its function is as follows. Induces gene transcription inhibition. This is Teneurin-2 (Tenm2) from Rattus norvegicus (Rat).